The sequence spans 232 residues: Large ribosomal subunit protein uL1 (232 aa).

Belongs to the universal ribosomal protein uL1 family. Part of the 50S ribosomal subunit.

In terms of biological role, binds directly to 23S rRNA. The L1 stalk is quite mobile in the ribosome, and is involved in E site tRNA release. Functionally, protein L1 is also a translational repressor protein, it controls the translation of the L11 operon by binding to its mRNA. This is Large ribosomal subunit protein uL1 from Stenotrophomonas maltophilia (strain K279a).